The chain runs to 420 residues: 3-isopropylmalate dehydratase large subunit (420 aa).

[4Fe-4S] cluster contacts are provided by cysteine 300, cysteine 360, and cysteine 363.

Belongs to the aconitase/IPM isomerase family. LeuC type 2 subfamily. Heterodimer of LeuC and LeuD. It depends on [4Fe-4S] cluster as a cofactor.

It carries out the reaction (2R,3S)-3-isopropylmalate = (2S)-2-isopropylmalate. It functions in the pathway amino-acid biosynthesis; L-leucine biosynthesis; L-leucine from 3-methyl-2-oxobutanoate: step 2/4. Its function is as follows. Catalyzes the isomerization between 2-isopropylmalate and 3-isopropylmalate, via the formation of 2-isopropylmaleate. This is 3-isopropylmalate dehydratase large subunit from Halothermothrix orenii (strain H 168 / OCM 544 / DSM 9562).